The following is a 53-amino-acid chain: Large ribosomal subunit protein bL32 (53 aa).

A compositionally biased stretch (basic residues) spans M1 to Y20. The interval M1–A53 is disordered. Over residues N42–A53 the composition is skewed to polar residues.

This sequence belongs to the bacterial ribosomal protein bL32 family.

This chain is Large ribosomal subunit protein bL32, found in Sulfurovum sp. (strain NBC37-1).